A 248-amino-acid chain; its full sequence is Myelin protein P0 (248 aa).

The first 29 residues, 1-29 (MAPGAPSSSPSPILAVLLFSSLVLSPAQA), serve as a signal peptide directing secretion. One can recognise an Ig-like V-type domain in the interval 30–143 (IVVYTDREVH…DIVGKTSQVT (114 aa)). The Extracellular portion of the chain corresponds to 30 to 153 (IVVYTDREVH…LYVFEKVPTR (124 aa)). A disulfide bond links cysteine 50 and cysteine 127. N-linked (GlcNAc...) (complex) asparagine glycosylation is present at asparagine 122. A helical transmembrane segment spans residues 154 to 179 (YGVVLGAVIGGVLGVVLLLLLLFYVV). The Cytoplasmic segment spans residues 180-248 (RYCWLRRQAA…GLGESRKDKK (69 aa)). Serine 210 carries the phosphoserine; by PKC modification. The tract at residues 224 to 248 (DHSRSTKAVSEKKAKGLGESRKDKK) is disordered. Phosphoserine is present on residues serine 226 and serine 228. A phosphoserine; by PKC mark is found at serine 233 and serine 243.

This sequence belongs to the myelin P0 protein family. Homodimer and homotetramer. In terms of processing, N-glycosylated; contains sulfate-substituted glycan. In terms of tissue distribution, found only in peripheral nervous system Schwann cells.

It localises to the cell membrane. The protein resides in the myelin membrane. In terms of biological role, is an adhesion molecule necessary for normal myelination in the peripheral nervous system. It mediates adhesion between adjacent myelin wraps and ultimately drives myelin compaction. The polypeptide is Myelin protein P0 (MPZ) (Homo sapiens (Human)).